The primary structure comprises 238 residues: MEHMFPENQIENLFVGWIKKHIRNGDLTLFEEFFKTDPWIVNRCDKNGSSVFMWICIYGRIDFLKFLFKQESYPGEIINHHRRDNDGNSALHYLAEKKNHLILEEVLGYFGKNGTRICLPNFNGMTPVMKAAMRGRTLNMLSLIKFGADPTQKDYHRGFTAWDWAVFTGNMELVKSLNHDYQKPLYMHFPLYKLDVFHRWFKKKPKIIITGCKNNVYEKLPEQNPNFLCVKKLNKYGK.

ANK repeat units follow at residues 48–80 (GSSV…IINH), 87–118 (GNSA…TRIC), 124–153 (GMTP…PTQK), and 158–187 (GFTA…PLYM). The short motif at 80–86 (HHRRDND) is the Nuclear localization signal element. The Nuclear localization signal signature appears at 202 to 213 (KKKPKIIITGCK). The PxIxITxC motif; Interaction with host PPP3CA signature appears at 205-212 (PKIIITGC). An FLCV motif motif is present at residues 227 to 230 (FLCV).

Belongs to the asfivirus A238L family. In terms of assembly, interacts with host PPIA. Interacts with host PPP3CA/Calcineurin. Interacts with host RELA/p65; interaction of the 32 kDa form with host RELA results in the formation of a stable complex with NF-kappa-B. Interacts with host PPP3R1. Interacts with host EP300; this interaction inhibits the association of host EP300 with host RELA, JUN and NFATC2. In terms of processing, the protein exists in a 28 kDa and a 32 kDa form, probably due to post-translational modifications which are neither phosphorylation, nor sumoylation.

It is found in the host nucleus. It localises to the host cytoplasm. IkB-like protein that inhibits the binding of NF-kappa-B to DNA, thereby downregulating pro-inflammatory cytokine production. Forms a heterodimer with the NF-kappa-B subunit RELA/p65 and prevents the activation of the NF-kappa-B transcription factor. Inhibits calcineurin function, which is required for the induction of nuclear factor of activated T cells (NFAT)-dependent immune response genes. Prevents the binding of substrates to calcineurin without affecting the phosphatase activity. Does not contain the serine residues that are phosphorylated by host IkB kinase and thus is not degraded following stimulation of the NFkB pathway. The polypeptide is IkB-like protein (A238L) (Ornithodoros (relapsing fever ticks)).